Consider the following 332-residue polypeptide: Methylthioribose-1-phosphate isomerase (332 aa).

Substrate contacts are provided by residues 44–46 (RGA), R87, and Q192. D233 acts as the Proton donor in catalysis. Substrate is bound at residue 243–244 (NK).

It belongs to the eIF-2B alpha/beta/delta subunits family. MtnA subfamily.

It carries out the reaction 5-(methylsulfanyl)-alpha-D-ribose 1-phosphate = 5-(methylsulfanyl)-D-ribulose 1-phosphate. It functions in the pathway amino-acid biosynthesis; L-methionine biosynthesis via salvage pathway; L-methionine from S-methyl-5-thio-alpha-D-ribose 1-phosphate: step 1/6. In terms of biological role, catalyzes the interconversion of methylthioribose-1-phosphate (MTR-1-P) into methylthioribulose-1-phosphate (MTRu-1-P). In Dehalococcoides mccartyi (strain CBDB1), this protein is Methylthioribose-1-phosphate isomerase.